We begin with the raw amino-acid sequence, 363 residues long: p21-activated protein kinase-interacting protein 1-like (363 aa).

WD repeat units lie at residues 38 to 75, 78 to 116, 119 to 158, 200 to 238, and 241 to 282; these read AHTA…EHGA, HHNG…CQQT, AHKG…SAFI, NNPK…CVCE, and AHEN…VQTS. Residues 309–363 form a disordered region; the sequence is KEKSNTAVTASAVKDCDRPKKKKAQNETTDKEASETQVVHKKRKPETKQKKKKPS. Residues 322 to 342 are compositionally biased toward basic and acidic residues; that stretch reads KDCDRPKKKKAQNETTDKEAS. Residues 347–363 show a composition bias toward basic residues; that stretch reads VHKKRKPETKQKKKKPS.

The protein localises to the nucleus. The protein resides in the nucleolus. Its function is as follows. Negatively regulates the PAK1 kinase. PAK1 is a member of the PAK kinase family, which has been shown to play a positive role in the regulation of signaling pathways involving MAPK8 and RELA. PAK1 exists as an inactive homodimer, which is activated by binding of small GTPases such as CDC42 to an N-terminal regulatory domain. PAK1IP1 also binds to the N-terminus of PAK1, and inhibits the specific activation of PAK1 by CDC42. May be involved in ribosomal large subunit assembly. The chain is p21-activated protein kinase-interacting protein 1-like (pak1ip1) from Xenopus laevis (African clawed frog).